A 445-amino-acid chain; its full sequence is Mitochondrial-processing peptidase subunit alpha-2 (445 aa).

Residues M1–S13 constitute a mitochondrion transit peptide.

This sequence belongs to the peptidase M16 family. In terms of assembly, heterodimer of alpha and beta subunits, forming the mitochondrial processing protease (MPP) in which subunit alpha is involved in substrate recognition and binding and subunit beta is the catalytic subunit.

The protein localises to the mitochondrion matrix. Its function is as follows. Substrate recognition and binding subunit of the essential mitochondrial processing protease (MPP), which cleaves the mitochondrial sequence off newly imported precursors proteins. This chain is Mitochondrial-processing peptidase subunit alpha-2 (mppA2), found in Dictyostelium discoideum (Social amoeba).